The following is a 271-amino-acid chain: Small ribosomal subunit protein uS9m (271 aa).

The transit peptide at 1–11 (MFRSLAKLRCF) directs the protein to the mitochondrion. Residues 251–271 (KVERKKTGQPKARKKYTWVKR) are disordered. Positions 252 to 271 (VERKKTGQPKARKKYTWVKR) are enriched in basic residues.

Belongs to the universal ribosomal protein uS9 family. As to quaternary structure, component of the mitochondrial small ribosomal subunit (mt-SSU). Mature yeast 74S mitochondrial ribosomes consist of a small (37S) and a large (54S) subunit. The 37S small subunit contains a 15S ribosomal RNA (15S mt-rRNA) and at least 32 different proteins. The 54S large subunit contains a 21S rRNA (21S mt-rRNA) and at least 45 different proteins.

It is found in the mitochondrion. In terms of biological role, component of the mitochondrial ribosome (mitoribosome), a dedicated translation machinery responsible for the synthesis of mitochondrial genome-encoded proteins, including at least some of the essential transmembrane subunits of the mitochondrial respiratory chain. The mitoribosomes are attached to the mitochondrial inner membrane and translation products are cotranslationally integrated into the membrane. This is Small ribosomal subunit protein uS9m (mrps9) from Schizosaccharomyces pombe (strain 972 / ATCC 24843) (Fission yeast).